A 490-amino-acid polypeptide reads, in one-letter code: MVPVVALVGRPNVGKSTLFNRLTRTRDALVADFPGLTRDRKYGRAEIEGREFICIDTGGIDGTEDGVETRMAEQSLLAIEEADVVLFMVDARAGLMPADEAIAKHLRSREKPTFLVANKTDGLDPDQAVVDFYALGLGEIYPIAASHGRGVLSLLEHVLLPWMEDLAPQEEVDEDAEYWAQFEAEENGEEEEEDDFDPQSLPIKLAIVGRPNVGKSTLTNRILGEERVVVYDMPGTTRDSIYIPMERDGREYVLIDTAGVRKRGKITDAVEKFSVIKTLQAIEDANVVMLVIDAREGISDQDLSLLGFILNSGRSLVIVVNKWDGLSQEVKEQVKETLDFRLGFIDFARVHFISALHGSGVGNLFESVREAYDSSTRRVGTSMLTRIMTMAVEDHQPPLVRGRRVKLKYAHAGGYNPPIVVIHGNQVKDLSDSYKRYLMNYFRKSLDVMGSPIRIQFKEGENPYANKRNTLTPTQMRKRKRLMKHIKKSK.

EngA-type G domains are found at residues 3–166 (PVVA…MEDL) and 203–376 (IKLA…DSST). GTP-binding positions include 9 to 16 (GRPNVGKS), 56 to 60 (DTGGI), 118 to 121 (NKTD), 209 to 216 (GRPNVGKS), 256 to 260 (DTAGV), and 321 to 324 (NKWD). The KH-like domain maps to 377–461 (RRVGTSMLTR…PIRIQFKEGE (85 aa)).

It belongs to the TRAFAC class TrmE-Era-EngA-EngB-Septin-like GTPase superfamily. EngA (Der) GTPase family. As to quaternary structure, associates with the 50S ribosomal subunit.

Its function is as follows. GTPase that plays an essential role in the late steps of ribosome biogenesis. The protein is GTPase Der of Escherichia coli O127:H6 (strain E2348/69 / EPEC).